The primary structure comprises 62 residues: MIPVRCFTCGKVISTVWEEYQQRKAAGEDPKEILDSLGLDRYCCRRMLLSHKETVDELYPYT.

Cys6, Cys9, Cys43, and Cys44 together coordinate Zn(2+).

The protein belongs to the archaeal Rpo10/eukaryotic RPB10 RNA polymerase subunit family. Part of the RNA polymerase complex. Zn(2+) is required as a cofactor.

The protein localises to the cytoplasm. The enzyme catalyses RNA(n) + a ribonucleoside 5'-triphosphate = RNA(n+1) + diphosphate. DNA-dependent RNA polymerase (RNAP) catalyzes the transcription of DNA into RNA using the four ribonucleoside triphosphates as substrates. The sequence is that of DNA-directed RNA polymerase subunit Rpo10 from Methanocorpusculum labreanum (strain ATCC 43576 / DSM 4855 / Z).